Here is a 246-residue protein sequence, read N- to C-terminus: tRNA pseudouridine synthase A (246 aa).

Asp52 acts as the Nucleophile in catalysis. Tyr110 contacts substrate.

It belongs to the tRNA pseudouridine synthase TruA family. In terms of assembly, homodimer.

It catalyses the reaction uridine(38/39/40) in tRNA = pseudouridine(38/39/40) in tRNA. Formation of pseudouridine at positions 38, 39 and 40 in the anticodon stem and loop of transfer RNAs. The sequence is that of tRNA pseudouridine synthase A from Exiguobacterium sp. (strain ATCC BAA-1283 / AT1b).